Reading from the N-terminus, the 370-residue chain is Serine/threonine-protein kinase RIM11/MSD1 (370 aa).

A Protein kinase domain is found at 39–322 (FPTTEVVGHG…ALQCLCSPYF (284 aa)). ATP-binding positions include 45 to 53 (VGHGSFGVV) and Lys-68. The Proton acceptor role is filled by Asp-164. Tyr-199 carries the phosphotyrosine modification.

Belongs to the protein kinase superfamily. CMGC Ser/Thr protein kinase family. GSK-3 subfamily. Interacts with TDA1.

It catalyses the reaction L-seryl-[protein] + ATP = O-phospho-L-seryl-[protein] + ADP + H(+). It carries out the reaction L-threonyl-[protein] + ATP = O-phospho-L-threonyl-[protein] + ADP + H(+). Serine/threonine protein kinase that is thought to function in regulating kinetochore activity and entry into meiosis. Could phosphorylate IME1. This chain is Serine/threonine-protein kinase RIM11/MSD1 (RIM11), found in Saccharomyces cerevisiae (strain ATCC 204508 / S288c) (Baker's yeast).